The sequence spans 449 residues: Glucose-6-phosphate isomerase (449 aa).

E291 (proton donor) is an active-site residue. Active-site residues include H312 and K426.

The protein belongs to the GPI family.

The protein localises to the cytoplasm. It catalyses the reaction alpha-D-glucose 6-phosphate = beta-D-fructose 6-phosphate. The protein operates within carbohydrate biosynthesis; gluconeogenesis. It participates in carbohydrate degradation; glycolysis; D-glyceraldehyde 3-phosphate and glycerone phosphate from D-glucose: step 2/4. Functionally, catalyzes the reversible isomerization of glucose-6-phosphate to fructose-6-phosphate. The sequence is that of Glucose-6-phosphate isomerase from Streptococcus pyogenes serotype M2 (strain MGAS10270).